The chain runs to 79 residues: WAP four-disulfide core domain protein 10A (79 aa).

A signal peptide spans 1–21; sequence MAPQTLLPVLVLCVLLLQAQG. Positions 34-79 constitute a WAP domain; the sequence is LSPEIKVCQQQPKLYLCKHLCESHRDCQANNICCSTYCGNVCMSIL. Disulfide bonds link Cys-41-Cys-67, Cys-50-Cys-71, Cys-54-Cys-66, and Cys-60-Cys-75.

It is found in the secreted. In Homo sapiens (Human), this protein is WAP four-disulfide core domain protein 10A (WFDC10A).